We begin with the raw amino-acid sequence, 410 residues long: Cytochrome P450(MEG) (410 aa).

C355 contributes to the heme binding site.

This sequence belongs to the cytochrome P450 family. Heme serves as cofactor.

It localises to the cytoplasm. It carries out the reaction reduced 2[4Fe-4S]-[ferredoxin] + progesterone + O2 + 2 H(+) = 15beta-hydroxyprogesterone + oxidized 2[4Fe-4S]-[ferredoxin] + H2O. In terms of biological role, has the capacity to hydroxylate certain steroids in the 15-beta position. Also hydroxylates progesterone in the 11-alpha and 9-beta position. The polypeptide is Cytochrome P450(MEG) (cyp106A2) (Priestia megaterium (Bacillus megaterium)).